The following is a 491-amino-acid chain: 2-aminomuconic 6-semialdehyde dehydrogenase (491 aa).

Residues glutamate 252 and cysteine 286 contribute to the active site.

Belongs to the aldehyde dehydrogenase family. In terms of assembly, homotrimer.

The catalysed reaction is 2-aminomuconate 6-semialdehyde + NAD(+) + H2O = (2Z,4E)-2-aminomuconate + NADH + 2 H(+). Strongly inhibited by Ag(+) and Hg(+), and comnpletely inhibited by p-chloromercuribenzoic acid. Involved in the modified meta-cleavage pathway for 2-aminophenol catabolism. The enzyme is also active toward 2-hydroxymuconic 6-semialdehyde, acetaldehyde, propionaldehyde, and butyraldehyde. The sequence is that of 2-aminomuconic 6-semialdehyde dehydrogenase (amnC) from Pseudomonas sp.